The following is a 75-amino-acid chain: Exodeoxyribonuclease 7 small subunit (75 aa).

It belongs to the XseB family. As to quaternary structure, heterooligomer composed of large and small subunits.

The protein resides in the cytoplasm. The catalysed reaction is Exonucleolytic cleavage in either 5'- to 3'- or 3'- to 5'-direction to yield nucleoside 5'-phosphates.. Functionally, bidirectionally degrades single-stranded DNA into large acid-insoluble oligonucleotides, which are then degraded further into small acid-soluble oligonucleotides. The protein is Exodeoxyribonuclease 7 small subunit of Thermoanaerobacter sp. (strain X514).